A 145-amino-acid chain; its full sequence is Large ribosomal subunit protein uL16 (145 aa).

Belongs to the universal ribosomal protein uL16 family. As to quaternary structure, part of the 50S ribosomal subunit.

Binds 23S rRNA and is also seen to make contacts with the A and possibly P site tRNAs. This chain is Large ribosomal subunit protein uL16, found in Lactobacillus gasseri (strain ATCC 33323 / DSM 20243 / BCRC 14619 / CIP 102991 / JCM 1131 / KCTC 3163 / NCIMB 11718 / NCTC 13722 / AM63).